The chain runs to 2200 residues: Non-reducing polyketide synthase tpeB (2200 aa).

The region spanning 16-255 (FFGDQTVDTL…MDLPLGTPAH (240 aa)) is the Starter acyltransferase (SAT) domain. The Ketosynthase family 3 (KS3) domain occupies 382–815 (SNMIAIVGQS…GGNNCVLLEE (434 aa)). Active-site for beta-ketoacyl synthase activity residues include Cys-554, His-690, and His-729. The Malonyl-CoA:ACP transacylase (MAT) domain occupies 914–1202 (VFAFTGQGSQ…VLNSFIKATL (289 aa)). Residues 1296 to 1621 (TASLQRVREE…TKRILTTILG (326 aa)) form a product template (PT) domain region. Residues 1300–1433 (QRVREERIQG…CKIRFESKAD (134 aa)) are N-terminal hotdog fold. Positions 1300-1617 (QRVREERIQG…FQRLTKRILT (318 aa)) constitute a PKS/mFAS DH domain. The active-site Proton acceptor; for dehydratase activity is His-1332. The segment at 1462–1617 (NGHKLPKPVV…FQRLTKRILT (156 aa)) is C-terminal hotdog fold. The active-site Proton donor; for dehydratase activity is Asp-1522. Positions 1625–1652 (DHHNSNEVRNGNATTTHTNPPAHATTQS) are disordered. Low complexity predominate over residues 1636–1650 (NATTTHTNPPAHATT). 2 consecutive Carrier domains span residues 1671-1748 (TVGE…AELP) and 1791-1865 (ANYA…GPNT). O-(pantetheine 4'-phosphoryl)serine occurs at positions 1708 and 1825. Positions 1931-2173 (MFFLPDGTGY…TVPCDHLSIM (243 aa)) are thioesterase (TE) domain.

Pantetheine 4'-phosphate is required as a cofactor.

It participates in secondary metabolite biosynthesis. In terms of biological role, non-reducing polyketide synthase; part of the gene cluster that mediates the biosynthesis of polyesters containing 2,4-dihydroxy-6-(2-hydroxypropyl)benzoate and 3-hydroxybutyrate moieties, such as talapolyester G, 15G256beta and 15G256beta-2; as well as to oxidized derivatives such as 15G256alpha. The biosynthesis of the polyesters probably starts with the formation of the diketide 3-hydroxybutyryl-S-ACP catalyzed by the partially reducing polyketide synthase tpeA. The acceptance of 3-hydroxybutyryl by the non-reducing polyketide synthase tpeB would initiate further elongation and cyclization, catalyzed by KS and PT, respectively, to form 2,4-dihydroxy-6-(2-hydroxyn-propyl)benzoyl-S-ACP intermediate. The TE domain could catalyze lactonization at this step to yield 6-hydroxymellein as a derailment product. The polyesterification process maybe occurs when additional molecules of 3-hydroxybutyryl are transferred to tpeB. Following the first esterification step, an intramolecular cyclization catalyzed by the TE domain of tpeB would give talarodioxadione 1, whereas the ethyl esterification of talapolyester G perhaps happens spontaneously. Further oxidation by the cytochrome P450 monooxygenase tpeC then leads to the formation of oxidized derivatives. The sequence is that of Non-reducing polyketide synthase tpeB from Talaromyces stipitatus (strain ATCC 10500 / CBS 375.48 / QM 6759 / NRRL 1006) (Penicillium stipitatum).